The primary structure comprises 360 residues: DNA replication and repair protein RecF (360 aa).

Residue 33–40 (GENGSGKT) coordinates ATP.

The protein belongs to the RecF family.

The protein localises to the cytoplasm. Its function is as follows. The RecF protein is involved in DNA metabolism; it is required for DNA replication and normal SOS inducibility. RecF binds preferentially to single-stranded, linear DNA. It also seems to bind ATP. This Rickettsia massiliae (strain Mtu5) protein is DNA replication and repair protein RecF.